The chain runs to 1149 residues: Eukaryotic translation initiation factor 3 subunit A (1149 aa).

The PCI domain maps to 317–498 (IQRMTSHVLI…HSVHFGTDLS (182 aa)). Disordered stretches follow at residues 496 to 515 (DLSESQREDHPDGPTLQSMP) and 811 to 1149 (EEER…KHHR). Residues 811–885 (EEERRRIEEE…APRGEKEERG (75 aa)) are compositionally biased toward basic and acidic residues. Residues 886 to 895 (GGGGGGGAWR) are compositionally biased toward gly residues. Residues 908-924 (AKPESDWRNAREAREPA) show a composition bias toward basic and acidic residues. The span at 925–937 (PESAGASSAAAPA) shows a compositional bias: low complexity. Composition is skewed to basic and acidic residues over residues 961–970 (RPPRGDDREP), 1005–1095 (GPMR…DRRG), and 1113–1132 (EPAKPREERRGGEERPKEAR).

This sequence belongs to the eIF-3 subunit A family. In terms of assembly, component of the eukaryotic translation initiation factor 3 (eIF-3) complex.

The protein localises to the cytoplasm. Its function is as follows. RNA-binding component of the eukaryotic translation initiation factor 3 (eIF-3) complex, which is involved in protein synthesis of a specialized repertoire of mRNAs and, together with other initiation factors, stimulates binding of mRNA and methionyl-tRNAi to the 40S ribosome. The eIF-3 complex specifically targets and initiates translation of a subset of mRNAs involved in cell proliferation. This is Eukaryotic translation initiation factor 3 subunit A from Culex quinquefasciatus (Southern house mosquito).